Consider the following 345-residue polypeptide: NADPH dehydrogenase (345 aa).

FMN is bound at residue 23–26 (SPMC). Position 28 (tyrosine 28) interacts with substrate. FMN-binding residues include alanine 60 and glutamine 102. 164-167 (HGAH) contributes to the substrate binding site. Residues arginine 215 and 307 to 308 (GR) each bind FMN.

Belongs to the NADH:flavin oxidoreductase/NADH oxidase family. NamA subfamily. In terms of assembly, homotetramer. It depends on FMN as a cofactor.

It catalyses the reaction A + NADPH + H(+) = AH2 + NADP(+). Its function is as follows. Catalyzes the reduction of the double bond of an array of alpha,beta-unsaturated aldehydes and ketones. It also reduces the nitro group of nitroester and nitroaromatic compounds. It could have a role in detoxification processes. In Bacillus cereus (strain Q1), this protein is NADPH dehydrogenase.